We begin with the raw amino-acid sequence, 259 residues long: Insulin-induced gene 1 protein (259 aa).

Residues 1-66 (MPRLHDHVWN…ARPGSWHHDL (66 aa)) lie on the Cytoplasmic side of the membrane. The disordered stretch occupies residues 36–55 (PGVPEPEHAPRGQRAGTTGC). Residues 67–89 (VQRSLVLFSFGVVLALVLNLLQI) form a helical membrane-spanning segment. Over 90–108 (QRNVTLFPDEVIATIFSSA) the chain is Extracellular. A helical transmembrane segment spans residues 109-126 (WWVPPCCGTAAAVVGLLY). Residues 127 to 141 (PCIDSHLGEPHKFKR) lie on the Cytoplasmic side of the membrane. Residues K138 and K140 each participate in a glycyl lysine isopeptide (Lys-Gly) (interchain with G-Cter in ubiquitin) cross-link. Residues 142–164 (EWASVMRCIAVFVGINHASAKLD) form a helical membrane-spanning segment. Topologically, residues 165–167 (FAN) are extracellular. A helical membrane pass occupies residues 168–186 (NVQLSLTLAALSLGLWWTF). Topologically, residues 187-191 (DRSRS) are cytoplasmic. S189 is modified (phosphoserine). A helical membrane pass occupies residues 192-213 (GLGLGITIAFLATLITQFLVYN). The Extracellular segment spans residues 214–227 (GVYQYTSPDFLYIR). Residues 228–245 (SWLPCIFFSGGVTVGNIG) form a helical membrane-spanning segment. The Cytoplasmic portion of the chain corresponds to 246–259 (RQLAMGVPEKPHSD). Positions 253–259 (PEKPHSD) match the KxHxx motif.

This sequence belongs to the INSIG family. Interacts with SCAP; interaction is direct and only takes place in the presence of sterols; it prevents interaction between SCAP and the coat protein complex II (COPII). Associates with the SCAP-SREBP complex (composed of SCAP and SREBF1/SREBP1 or SREBF2/SREBP2); association is mediated via its interaction with SCAP and only takes place in the presence of sterols. Interaction with SCAP is mutually exclusive with PAQR3. Interacts with HMGCR (via its SSD); the interaction, accelerated by sterols, leads to the recruitment of HMGCR to AMFR/gp78 for its ubiquitination by the sterol-mediated ERAD pathway. Interacts with AMFR/gp78 (via its membrane domain); the interaction recruits HMCR at the ER membrane for its ubiquitination and degradation by the sterol-mediated ERAD pathway. Interacts with SOAT2/ACAT2; leading to promote recruitment of AMFR/gp78 and subsequent ubiquitination of SOAT2/ACAT2. Interacts with RNF139. Interacts with RNF145. Post-translationally, phosphorylation at Ser-189 by PCK1 reduces binding to oxysterol, disrupting the interaction between INSIG1 and SCAP, thereby promoting nuclear translocation of SREBP proteins (SREBF1/SREBP1 or SREBF2/SREBP2) and subsequent transcription of downstream lipogenesis-related genes. Ubiquitinated by AMFR/gp78 in response to sterol deprivation, leading to its degradation: when the SCAP-SREBP complex becomes dissociated from INSIG1, INSIG1 is then ubiquitinated and degraded in proteasomes. Although ubiquitination is required for rapid INSIG1 degradation, it is not required for release of the SCAP-SREBP complex. Ubiquitinated by RNF139.

It is found in the endoplasmic reticulum membrane. In terms of biological role, oxysterol-binding protein that mediates feedback control of cholesterol synthesis by controlling both endoplasmic reticulum to Golgi transport of SCAP and degradation of HMGCR. Acts as a negative regulator of cholesterol biosynthesis by mediating the retention of the SCAP-SREBP complex in the endoplasmic reticulum, thereby blocking the processing of sterol regulatory element-binding proteins (SREBPs) SREBF1/SREBP1 and SREBF2/SREBP2. Binds oxysterol, including 25-hydroxycholesterol, regulating interaction with SCAP and retention of the SCAP-SREBP complex in the endoplasmic reticulum. In presence of oxysterol, interacts with SCAP, retaining the SCAP-SREBP complex in the endoplasmic reticulum, thereby preventing SCAP from escorting SREBF1/SREBP1 and SREBF2/SREBP2 to the Golgi. Sterol deprivation or phosphorylation by PCK1 reduce oxysterol-binding, disrupting the interaction between INSIG1 and SCAP, thereby promoting Golgi transport of the SCAP-SREBP complex, followed by processing and nuclear translocation of SREBF1/SREBP1 and SREBF2/SREBP2. Also regulates cholesterol synthesis by regulating degradation of HMGCR: initiates the sterol-mediated ubiquitin-mediated endoplasmic reticulum-associated degradation (ERAD) of HMGCR via recruitment of the reductase to the ubiquitin ligases AMFR/gp78 and/or RNF139. Also regulates degradation of SOAT2/ACAT2 when the lipid levels are low: initiates the ubiquitin-mediated degradation of SOAT2/ACAT2 via recruitment of the ubiquitin ligases AMFR/gp78. The protein is Insulin-induced gene 1 protein of Mus musculus (Mouse).